The primary structure comprises 960 residues: Endosome/lysosome-associated apoptosis and autophagy regulator family member 2 (960 aa).

Residues 1–26 (MLFLRPGPARGRGRGRPARAPHSGLS) are disordered. A signal peptide spans 1–44 (MLFLRPGPARGRGRGRPARAPHSGLSPPWSPAWICCWALAGCQA). At 45-860 (AWAGAGDLPS…TCETVDFWLK (816 aa)) the chain is on the extracellular side. Asn-171 carries an N-linked (GlcNAc...) asparagine glycan. Cystine bridges form between Cys-295-Cys-312, Cys-325-Cys-348, and Cys-328-Cys-360. 2 N-linked (GlcNAc...) asparagine glycosylation sites follow: Asn-407 and Asn-622. Positions 597–808 (PTCPYIRSMA…LWESVEACPL (212 aa)) constitute an MRH domain. 4 disulfide bridges follow: Cys-599–Cys-651, Cys-661–Cys-689, Cys-758–Cys-794, and Cys-770–Cys-806. A helical membrane pass occupies residues 861 to 881 (VGAGVGAFTAVLLVALTCYFW). The Cytoplasmic segment spans residues 882-960 (KKNQKLEYKY…QLKSSRSPNI (79 aa)). Residue Ser-949 is modified to Phosphoserine.

It belongs to the ELAPOR family.

It localises to the cell membrane. Its function is as follows. Functions as a regulator of the BMP signaling pathway and may be involved in epidermal differentiation. The sequence is that of Endosome/lysosome-associated apoptosis and autophagy regulator family member 2 from Bos taurus (Bovine).